We begin with the raw amino-acid sequence, 901 residues long: HTH-type transcriptional regulator MalT (901 aa).

Residue 39-46 participates in ATP binding; it reads SPAGYGKT. An HTH luxR-type domain is found at 829–894; sequence ELIRTSPLTQ…AAVQHAQKLL (66 aa). A DNA-binding region (H-T-H motif) is located at residues 853–872; sequence NEQIAGELEVAATTIKTHIR.

Belongs to the MalT family. As to quaternary structure, monomer in solution. Oligomerizes to an active state in the presence of the positive effectors ATP and maltotriose.

Its activity is regulated as follows. Activated by ATP and maltotriose, which are both required for DNA binding. Functionally, positively regulates the transcription of the maltose regulon whose gene products are responsible for uptake and catabolism of malto-oligosaccharides. Specifically binds to the promoter region of its target genes, recognizing a short DNA motif called the MalT box. This chain is HTH-type transcriptional regulator MalT, found in Escherichia coli O45:K1 (strain S88 / ExPEC).